We begin with the raw amino-acid sequence, 156 residues long: Small ribosomal subunit protein uS7 (156 aa).

The protein belongs to the universal ribosomal protein uS7 family. Part of the 30S ribosomal subunit. Contacts proteins S9 and S11.

In terms of biological role, one of the primary rRNA binding proteins, it binds directly to 16S rRNA where it nucleates assembly of the head domain of the 30S subunit. Is located at the subunit interface close to the decoding center, probably blocks exit of the E-site tRNA. The chain is Small ribosomal subunit protein uS7 from Syntrophus aciditrophicus (strain SB).